Reading from the N-terminus, the 578-residue chain is Raftlin (578 aa).

Glycine 2 carries N-myristoyl glycine lipidation. A lipid anchor (S-palmitoyl cysteine) is attached at cysteine 3. Residues 169–184 (VNSAGSSAPVSTANST) show a composition bias toward polar residues. Disordered stretches follow at residues 169–271 (VNSA…VHEE), 449–525 (FSRE…PGGL), and 551–578 (CTGHSNPGEDARDGDAEEVRELGTVEEN). 3 positions are modified to phosphoserine: serine 183, serine 199, and serine 220. A compositionally biased stretch (basic and acidic residues) spans 185–206 (EDARDAKNARGDHASLENEKPG). A compositionally biased stretch (basic residues) spans 457 to 466 (RQMRKSKGKL). The span at 467–485 (SARDKQQAEENEKNLEDQS) shows a compositional bias: basic and acidic residues. Serine 505 carries the post-translational modification Phosphoserine. Basic and acidic residues-rich tracts occupy residues 506 to 518 (EEMKGPVQEDKGE) and 557 to 578 (PGEDARDGDAEEVRELGTVEEN).

This sequence belongs to the raftlin family. Interacts with TLR4; the interaction occurs in response to lipopolysaccharide stimulation. Interacts with CLTC; the interaction occurs in response to pathogens. Interacts with AP2A1 and AP2B1. As to expression, expressed in B-cells (at protein level). Expressed in dendritic cells and macrophages.

The protein localises to the cell membrane. It localises to the cytoplasm. The protein resides in the membrane raft. It is found in the endosome. Its subcellular location is the early endosome. Its function is as follows. Involved in protein trafficking via association with clathrin and AP2 complex. Upon bacterial lipopolysaccharide stimulation, mediates internalization of TLR4 to endosomes in dendritic cells and macrophages; and internalization of poly(I:C) to TLR3-positive endosomes in myeloid dendritic cells and epithelial cells; resulting in activation of TICAM1-mediated signaling and subsequent IFNB1 production. Involved in T-cell antigen receptor-mediated signaling by regulating tyrosine kinase LCK localization, T-cell dependent antibody production and cytokine secretion. May regulate B-cell antigen receptor-mediated signaling. May play a pivotal role in the formation and/or maintenance of lipid rafts. The polypeptide is Raftlin (RFTN1) (Homo sapiens (Human)).